The chain runs to 229 residues: DNA mismatch repair protein MutH (229 aa).

It belongs to the MutH family.

The protein localises to the cytoplasm. In terms of biological role, sequence-specific endonuclease that cleaves unmethylated GATC sequences. It is involved in DNA mismatch repair. The sequence is that of DNA mismatch repair protein MutH from Shigella flexneri serotype 5b (strain 8401).